The chain runs to 1195 residues: DNA-directed RNA polymerase subunit Rpo2 (1195 aa).

Positions 894–909 (LEEGEERLGPQRRRES) are enriched in basic and acidic residues. The disordered stretch occupies residues 894 to 914 (LEEGEERLGPQRRRESSVTMR). The Zn(2+) site is built by C1135, C1140, C1155, and C1158.

The protein belongs to the RNA polymerase beta chain family. Part of the RNA polymerase complex. Zn(2+) is required as a cofactor.

It is found in the cytoplasm. It carries out the reaction RNA(n) + a ribonucleoside 5'-triphosphate = RNA(n+1) + diphosphate. In terms of biological role, DNA-dependent RNA polymerase (RNAP) catalyzes the transcription of DNA into RNA using the four ribonucleoside triphosphates as substrates. This subunit is involved in DNA promoter recognition. The polypeptide is DNA-directed RNA polymerase subunit Rpo2 (Thermoplasma acidophilum (strain ATCC 25905 / DSM 1728 / JCM 9062 / NBRC 15155 / AMRC-C165)).